A 242-amino-acid chain; its full sequence is Small ribosomal subunit protein uS3 (242 aa).

Residues 39–110 form the KH type-2 domain; that stretch reads IRRFIHKKYG…QVRINVVEVE (72 aa). Positions 216 to 242 are disordered; the sequence is QSMPVGASPRRRGNRRPQQFEDRSNEG. The span at 233–242 shows a compositional bias: basic and acidic residues; it reads QQFEDRSNEG.

Belongs to the universal ribosomal protein uS3 family. As to quaternary structure, part of the 30S ribosomal subunit. Forms a tight complex with proteins S10 and S14.

Functionally, binds the lower part of the 30S subunit head. Binds mRNA in the 70S ribosome, positioning it for translation. The chain is Small ribosomal subunit protein uS3 from Prochlorococcus marinus (strain MIT 9303).